The chain runs to 339 residues: MKDVNDEERIIGAESNEEDETIELSLRPQLLAQYIGQDKVKSEMKIYIKAAKQRDEALDHVLLYGPPGLGKTTLAFVIANEMGVHLKSTSGPAIEKAGDLVALLSELNPGDVLFIDEIHRLAKPVEEVLYSAMEDFYIDIVVGEGQTTHAVHVPLPPFTLIGATTRAGQLSAPLRDRFGIIEHMQYYSIDDLEKIIQRSSVVFNTKIDPEAAIELARRSRGTPRVANRLLKRVRDFAEVKGEEAISLATTKHSLHLLEVDDEGLDQTDRKLLRMMIENYGGGPVGIKTIAANVGEDTDTIEEVYEPYLLQKGFITRTPRGRSVTQKAYLQLGYPPKKAE.

The tract at residues 2 to 187 is large ATPase domain (RuvB-L); the sequence is KDVNDEERII…FGIIEHMQYY (186 aa). ATP-binding positions include leucine 26, arginine 27, glycine 68, lysine 71, threonine 72, threonine 73, 134 to 136, arginine 177, tyrosine 187, and arginine 224; that span reads EDF. Residue threonine 72 coordinates Mg(2+). Residues 188 to 258 are small ATPAse domain (RuvB-S); sequence SIDDLEKIIQ…TTKHSLHLLE (71 aa). A head domain (RuvB-H) region spans residues 261–339; the sequence is DEGLDQTDRK…QLGYPPKKAE (79 aa). DNA is bound by residues arginine 316 and arginine 321.

It belongs to the RuvB family. In terms of assembly, homohexamer. Forms an RuvA(8)-RuvB(12)-Holliday junction (HJ) complex. HJ DNA is sandwiched between 2 RuvA tetramers; dsDNA enters through RuvA and exits via RuvB. An RuvB hexamer assembles on each DNA strand where it exits the tetramer. Each RuvB hexamer is contacted by two RuvA subunits (via domain III) on 2 adjacent RuvB subunits; this complex drives branch migration. In the full resolvosome a probable DNA-RuvA(4)-RuvB(12)-RuvC(2) complex forms which resolves the HJ.

Its subcellular location is the cytoplasm. It carries out the reaction ATP + H2O = ADP + phosphate + H(+). The RuvA-RuvB-RuvC complex processes Holliday junction (HJ) DNA during genetic recombination and DNA repair, while the RuvA-RuvB complex plays an important role in the rescue of blocked DNA replication forks via replication fork reversal (RFR). RuvA specifically binds to HJ cruciform DNA, conferring on it an open structure. The RuvB hexamer acts as an ATP-dependent pump, pulling dsDNA into and through the RuvAB complex. RuvB forms 2 homohexamers on either side of HJ DNA bound by 1 or 2 RuvA tetramers; 4 subunits per hexamer contact DNA at a time. Coordinated motions by a converter formed by DNA-disengaged RuvB subunits stimulates ATP hydrolysis and nucleotide exchange. Immobilization of the converter enables RuvB to convert the ATP-contained energy into a lever motion, pulling 2 nucleotides of DNA out of the RuvA tetramer per ATP hydrolyzed, thus driving DNA branch migration. The RuvB motors rotate together with the DNA substrate, which together with the progressing nucleotide cycle form the mechanistic basis for DNA recombination by continuous HJ branch migration. Branch migration allows RuvC to scan DNA until it finds its consensus sequence, where it cleaves and resolves cruciform DNA. The chain is Holliday junction branch migration complex subunit RuvB from Lactobacillus gasseri (strain ATCC 33323 / DSM 20243 / BCRC 14619 / CIP 102991 / JCM 1131 / KCTC 3163 / NCIMB 11718 / NCTC 13722 / AM63).